Here is a 250-residue protein sequence, read N- to C-terminus: UPF0259 membrane protein SG1383 (250 aa).

The next 6 helical transmembrane spans lie at 20 to 40 (FASI…LGHA), 86 to 106 (AGTL…LTMI), 121 to 141 (IGLS…TTLL), 146 to 166 (LLLI…APVI), 191 to 211 (LLAP…LLAT), and 219 to 239 (LVAV…LLIY).

It belongs to the UPF0259 family.

Its subcellular location is the cell inner membrane. The protein is UPF0259 membrane protein SG1383 of Sodalis glossinidius (strain morsitans).